Consider the following 123-residue polypeptide: uncharacterized protein (123 aa).

Residues 17–117 (LNNNAFLVDV…NNQDKGWKQN (101 aa)) form the Rhodanese domain.

This is an uncharacterized protein from Rickettsia prowazekii (strain Madrid E).